Reading from the N-terminus, the 30-residue chain is Kappa-sparatoxin-Hv1b (30 aa).

3 cysteine pairs are disulfide-bonded: Cys3/Cys17, Cys10/Cys22, and Cys16/Cys26. Trp30 is modified (tryptophan amide).

This sequence belongs to the neurotoxin 10 (Hwtx-1) family. 19 (HpTX2) subfamily. In terms of tissue distribution, expressed by the venom gland.

The protein localises to the secreted. In terms of biological role, inhibitor of voltage-gated potassium channels of the Kv4/KCND family. Inhibition of Kv4.3/KCND3 and Kv4.2/KCND2 is strongly voltage-dependent, while inhibition of Kv4.1/KCND1 shows less voltage-dependence. Its binding site may be near the potassium channel voltage sensor. Also blocks calcium channels. In Heteropoda venatoria (Brown huntsman spider), this protein is Kappa-sparatoxin-Hv1b.